We begin with the raw amino-acid sequence, 238 residues long: 2-C-methyl-D-erythritol 4-phosphate cytidylyltransferase (238 aa).

Belongs to the IspD/TarI cytidylyltransferase family. IspD subfamily.

It catalyses the reaction 2-C-methyl-D-erythritol 4-phosphate + CTP + H(+) = 4-CDP-2-C-methyl-D-erythritol + diphosphate. It participates in isoprenoid biosynthesis; isopentenyl diphosphate biosynthesis via DXP pathway; isopentenyl diphosphate from 1-deoxy-D-xylulose 5-phosphate: step 2/6. In terms of biological role, catalyzes the formation of 4-diphosphocytidyl-2-C-methyl-D-erythritol from CTP and 2-C-methyl-D-erythritol 4-phosphate (MEP). In Acinetobacter baumannii (strain ATCC 17978 / DSM 105126 / CIP 53.77 / LMG 1025 / NCDC KC755 / 5377), this protein is 2-C-methyl-D-erythritol 4-phosphate cytidylyltransferase.